The following is a 465-amino-acid chain: Probable tRNA modification GTPase MnmE (465 aa).

3 residues coordinate (6S)-5-formyl-5,6,7,8-tetrahydrofolate: Arg-23, Glu-85, and Arg-124. The region spanning 221 to 384 (GTKVCIIGKP…LNNCILDLSS (164 aa)) is the TrmE-type G domain. GTP-binding positions include 231-236 (NVGKSS), 250-256 (TNFPGTT), and 275-278 (DTAG). Ser-235 and Thr-256 together coordinate Mg(2+). A (6S)-5-formyl-5,6,7,8-tetrahydrofolate-binding site is contributed by Lys-465.

This sequence belongs to the TRAFAC class TrmE-Era-EngA-EngB-Septin-like GTPase superfamily. TrmE GTPase family. Requires K(+) as cofactor.

The protein localises to the plastid. The protein resides in the chloroplast. Its function is as follows. Exhibits a very high intrinsic GTPase hydrolysis rate. Involved in the addition of a carboxymethylaminomethyl (cmnm) group at the wobble position (U34) of certain tRNAs, forming tRNA-cmnm(5)s(2)U34. In Cyanidium caldarium (Red alga), this protein is Probable tRNA modification GTPase MnmE.